Reading from the N-terminus, the 81-residue chain is Large ribosomal subunit protein bL31B (81 aa).

This sequence belongs to the bacterial ribosomal protein bL31 family. Type B subfamily. As to quaternary structure, part of the 50S ribosomal subunit.

The chain is Large ribosomal subunit protein bL31B from Limosilactobacillus reuteri (strain DSM 20016) (Lactobacillus reuteri).